The following is a 980-amino-acid chain: Putative helicase 087L (980 aa).

Residues 59-246 (INPHTLYDGV…IDLFNLILRT (188 aa)) form the Helicase ATP-binding domain. 72-79 (HEMGTGKT) provides a ligand contact to ATP. The DEAH box motif lies at 189-192 (DEAH). One can recognise a Helicase C-terminal domain in the interval 389–546 (RLSFVFSEFV…SIDLHMYEIA (158 aa)).

Belongs to the IIV-6 022L family. SNF2/RAD54 helicase subfamily.

The protein is Putative helicase 087L of Invertebrate iridescent virus 3 (IIV-3).